A 329-amino-acid polypeptide reads, in one-letter code: 4-hydroxythreonine-4-phosphate dehydrogenase (329 aa).

Substrate is bound by residues histidine 136 and threonine 137. A divalent metal cation contacts are provided by histidine 166, histidine 211, and histidine 266. Substrate-binding residues include lysine 274, asparagine 283, and arginine 292.

It belongs to the PdxA family. In terms of assembly, homodimer. It depends on Zn(2+) as a cofactor. Requires Mg(2+) as cofactor. Co(2+) is required as a cofactor.

It is found in the cytoplasm. The catalysed reaction is 4-(phosphooxy)-L-threonine + NAD(+) = 3-amino-2-oxopropyl phosphate + CO2 + NADH. It participates in cofactor biosynthesis; pyridoxine 5'-phosphate biosynthesis; pyridoxine 5'-phosphate from D-erythrose 4-phosphate: step 4/5. Functionally, catalyzes the NAD(P)-dependent oxidation of 4-(phosphooxy)-L-threonine (HTP) into 2-amino-3-oxo-4-(phosphooxy)butyric acid which spontaneously decarboxylates to form 3-amino-2-oxopropyl phosphate (AHAP). This Shigella sonnei (strain Ss046) protein is 4-hydroxythreonine-4-phosphate dehydrogenase.